Here is a 376-residue protein sequence, read N- to C-terminus: uncharacterized protein (376 aa).

This sequence belongs to the mimivirus L17x/L18x family.

This is an uncharacterized protein from Acanthamoeba polyphaga (Amoeba).